Consider the following 683-residue polypeptide: Multidrug resistance protein MdtO (683 aa).

The next 9 helical transmembrane spans lie at 43-63 (VILI…AVLF), 75-95 (FVAI…FLIY), 100-120 (GEPL…MFLM), 125-145 (LGLV…FPAM), 158-178 (WCIV…VLWF), 402-422 (FGGA…VMPW), 426-446 (IVEL…IATS), 457-477 (MVVT…YDLV), and 483-503 (ALGI…VWPE).

The protein belongs to the MdtO family. In terms of assembly, could be part of a tripartite efflux system composed of MdtN, MdtO and MdtP.

The protein resides in the cell inner membrane. Its function is as follows. Could be involved in resistance to puromycin, acriflavine and tetraphenylarsonium chloride. The polypeptide is Multidrug resistance protein MdtO (mdtO) (Escherichia coli O6:H1 (strain CFT073 / ATCC 700928 / UPEC)).